Reading from the N-terminus, the 93-residue chain is Cobalt transport protein CbiN (93 aa).

The next 2 helical transmembrane spans lie at leucine 5–glycine 25 and leucine 63–cysteine 83.

It belongs to the CbiN family. In terms of assembly, forms an energy-coupling factor (ECF) transporter complex composed of an ATP-binding protein (A component, CbiO), a transmembrane protein (T component, CbiQ) and 2 possible substrate-capture proteins (S components, CbiM and CbiN) of unknown stoichimetry.

Its subcellular location is the cell inner membrane. It functions in the pathway cofactor biosynthesis; adenosylcobalamin biosynthesis. Its function is as follows. Part of the energy-coupling factor (ECF) transporter complex CbiMNOQ involved in cobalt import. This chain is Cobalt transport protein CbiN, found in Salmonella arizonae (strain ATCC BAA-731 / CDC346-86 / RSK2980).